Consider the following 388-residue polypeptide: Protein FAM199X (388 aa).

Residues 288 to 312 (SMVSSASSSGSSVGNSASNSSANMS) are compositionally biased toward low complexity. The tract at residues 288-358 (SMVSSASSSG…QLKEQRQARK (71 aa)) is disordered. Residues serine 316 and serine 321 each carry the phosphoserine modification. The segment covering 330–349 (DSKKRSKQRKLQQKAFRKRQ) has biased composition (basic residues).

Belongs to the FAM199 family.

This is Protein FAM199X (Fam199x) from Mus musculus (Mouse).